The primary structure comprises 201 residues: Large ribosomal subunit protein uL4 (201 aa).

The interval 46–71 (QKTRAEVIGSGKKPWRQKGTGRARAG) is disordered.

Belongs to the universal ribosomal protein uL4 family. Part of the 50S ribosomal subunit.

In terms of biological role, one of the primary rRNA binding proteins, this protein initially binds near the 5'-end of the 23S rRNA. It is important during the early stages of 50S assembly. It makes multiple contacts with different domains of the 23S rRNA in the assembled 50S subunit and ribosome. Functionally, forms part of the polypeptide exit tunnel. In Shewanella sediminis (strain HAW-EB3), this protein is Large ribosomal subunit protein uL4.